The following is a 515-amino-acid chain: Histidine ammonia-lyase (515 aa).

Positions 142–144 (ASG) form a cross-link, 5-imidazolinone (Ala-Gly). Residue Ser143 is modified to 2,3-didehydroalanine (Ser).

This sequence belongs to the PAL/histidase family. Contains an active site 4-methylidene-imidazol-5-one (MIO), which is formed autocatalytically by cyclization and dehydration of residues Ala-Ser-Gly.

The protein resides in the cytoplasm. The enzyme catalyses L-histidine = trans-urocanate + NH4(+). It functions in the pathway amino-acid degradation; L-histidine degradation into L-glutamate; N-formimidoyl-L-glutamate from L-histidine: step 1/3. This chain is Histidine ammonia-lyase, found in Bradyrhizobium sp. (strain BTAi1 / ATCC BAA-1182).